Reading from the N-terminus, the 366-residue chain is Chorismate synthase (366 aa).

Arginine 48 is an NADP(+) binding site. Residues 125–127 (RSS), glycine 285, 300–304 (KPTPS), and arginine 327 each bind FMN.

The protein belongs to the chorismate synthase family. FMNH2 serves as cofactor.

It catalyses the reaction 5-O-(1-carboxyvinyl)-3-phosphoshikimate = chorismate + phosphate. It participates in metabolic intermediate biosynthesis; chorismate biosynthesis; chorismate from D-erythrose 4-phosphate and phosphoenolpyruvate: step 7/7. Its function is as follows. Catalyzes the anti-1,4-elimination of the C-3 phosphate and the C-6 proR hydrogen from 5-enolpyruvylshikimate-3-phosphate (EPSP) to yield chorismate, which is the branch point compound that serves as the starting substrate for the three terminal pathways of aromatic amino acid biosynthesis. This reaction introduces a second double bond into the aromatic ring system. This chain is Chorismate synthase, found in Methanococcoides burtonii (strain DSM 6242 / NBRC 107633 / OCM 468 / ACE-M).